The chain runs to 317 residues: Hps1-dma1 cluster cytochrome P450 monooxygenase cyp3.1 (317 aa).

Residues 183–205 are disordered; sequence PAIETDRKTSSHSRSPTALADKQ. Cysteine 260 provides a ligand contact to heme.

Belongs to the cytochrome P450 family. The cofactor is heme.

The protein operates within secondary metabolite biosynthesis. Cytochrome P450 monooxygenase; part of the hps1-dma1 gene cluster that probably mediates the biosynthesis a derivative of cyclopiazonic acid (CPA). The hybrid polyketide synthase-nonribosomal peptide synthetase (PKS-NRPS) nps1 might incorporates acetyl-CoA, malonyl-CoA, and tryptophan (Trp) and utilizes a C-terminal redox-incompetent reductase domain to make and release the tryptophan tetramic acid, cyclo-acetoacetyl-L-tryptophan (c-AATrp), as the first intermediate in the pathway. In addition, the cluster also includes the tryptophan dimethylallyltransferase dma1, the FAD-dependent oxidoreductase toxD, the cytochrome P450 monooxygenase cyp3.1 and the methyltransferase DOTSEDRAFT_139328; the latter 2 being not present in all CPA-producing fungi but involved in additional modifications that occur in biosynthesis the of a range of CPA and CPA-like products. Further studies are required to clarify whether the CPA-like hps1-dma1 cluster is functional or a non-functional relic reflecting evolution of D.septosporum. This is Hps1-dma1 cluster cytochrome P450 monooxygenase cyp3.1 (cyp3.1) from Dothistroma septosporum (strain NZE10 / CBS 128990) (Red band needle blight fungus).